Reading from the N-terminus, the 249-residue chain is Metal-staphylopine import system ATP-binding protein CntF (249 aa).

Residues 2–244 enclose the ABC transporter domain; sequence IKVTDVEKSY…DNAYTRELIE (243 aa). ATP is bound at residue 42 to 49; that stretch reads GESGSGKS.

Belongs to the ABC transporter superfamily. In terms of assembly, the complex is composed of two ATP-binding proteins (CntD and CntF), two transmembrane proteins (CntB and CntC) and a solute-binding protein (CntA).

The protein resides in the cell membrane. Its function is as follows. Part of the ABC transporter complex CntABCDF (Opp1) involved in the uptake of metal in complex with the metallophore staphylopine (StP). May be involved in the import of a large array of divalent metals ions such as nickel, cobalt, zinc, copper and iron. Probably responsible for energy coupling to the transport system. The sequence is that of Metal-staphylopine import system ATP-binding protein CntF from Staphylococcus aureus (strain Mu50 / ATCC 700699).